Consider the following 150-residue polypeptide: 3-dehydroquinate dehydratase (150 aa).

Tyrosine 26 acts as the Proton acceptor in catalysis. Substrate is bound by residues asparagine 77, histidine 83, and aspartate 90. Residue histidine 103 is the Proton donor of the active site. Substrate contacts are provided by residues 104–105 (IS) and arginine 114.

Belongs to the type-II 3-dehydroquinase family. Homododecamer.

The enzyme catalyses 3-dehydroquinate = 3-dehydroshikimate + H2O. It functions in the pathway metabolic intermediate biosynthesis; chorismate biosynthesis; chorismate from D-erythrose 4-phosphate and phosphoenolpyruvate: step 3/7. Catalyzes a trans-dehydration via an enolate intermediate. The protein is 3-dehydroquinate dehydratase of Buchnera aphidicola subsp. Acyrthosiphon pisum (strain 5A).